The chain runs to 565 residues: Salicyl-AMP ligase / salicyl-S-ArCP synthetase (565 aa).

ATP is bound by residues G214, G330, V352, D436, R451, and K542.

It belongs to the ATP-dependent AMP-binding enzyme family.

The enzyme catalyses salicylate + ATP + H(+) = 2-hydroxybenzoyl-5'-AMP + diphosphate. It catalyses the reaction 2-hydroxybenzoyl-5'-AMP + holo-[ACP] = salicyl-[ACP] + AMP + H(+). It functions in the pathway siderophore biosynthesis; mycobactin biosynthesis. With respect to regulation, inhibited by salicyl-AMS, an acyl-AMP analog. Also inhibited by 5'-O-[(N-acyl)sulfamoyl]adenosines. In terms of biological role, involved in the initial steps of the mycobactin biosynthetic pathway. Catalyzes the salicylation of the aryl carrier protein (ArCP) domain of MbtB through a two-step reaction. The first step is the ATP-dependent adenylation of salicylate to generate a salicyl-AMP intermediate. The second step is the transfer of this activated salicylate to MbtB to form a salicyl-ArCP domain thioester. The sequence is that of Salicyl-AMP ligase / salicyl-S-ArCP synthetase from Mycobacterium tuberculosis (strain ATCC 25618 / H37Rv).